A 351-amino-acid chain; its full sequence is Ion-translocating oxidoreductase complex subunit D (351 aa).

A run of 3 helical transmembrane segments spans residues 37–57, 88–108, and 123–143; these read YFFG…AILA, AIPP…AIVI, and PAMA…TTWL. Thr-187 is modified (FMN phosphoryl threonine). Transmembrane regions (helical) follow at residues 214–234, 241–261, 270–290, and 300–317; these read FAGL…LFLL, WHIP…FAVF, IFNL…TDPV, and LYYG…RSWG.

Belongs to the NqrB/RnfD family. In terms of assembly, the complex is composed of six subunits: RnfA, RnfB, RnfC, RnfD, RnfE and RnfG. It depends on FMN as a cofactor.

It localises to the cell inner membrane. In terms of biological role, part of a membrane-bound complex that couples electron transfer with translocation of ions across the membrane. The sequence is that of Ion-translocating oxidoreductase complex subunit D from Aliivibrio salmonicida (strain LFI1238) (Vibrio salmonicida (strain LFI1238)).